A 141-amino-acid chain; its full sequence is Large ribosomal subunit protein uL11 (141 aa).

The protein belongs to the universal ribosomal protein uL11 family. Part of the ribosomal stalk of the 50S ribosomal subunit. Interacts with L10 and the large rRNA to form the base of the stalk. L10 forms an elongated spine to which L12 dimers bind in a sequential fashion forming a multimeric L10(L12)X complex. In terms of processing, one or more lysine residues are methylated.

Forms part of the ribosomal stalk which helps the ribosome interact with GTP-bound translation factors. The protein is Large ribosomal subunit protein uL11 of Synechococcus sp. (strain CC9902).